The primary structure comprises 454 residues: Bifunctional protein GlmU (454 aa).

Residues 1–226 (MTTTVIILAA…AFEVEGVNDR (226 aa)) are pyrophosphorylase. UDP-N-acetyl-alpha-D-glucosamine is bound by residues 8–11 (LAAG), lysine 22, glutamine 73, 78–79 (GT), 100–102 (YGD), glycine 137, glutamate 151, asparagine 166, and asparagine 224. Aspartate 102 is a Mg(2+) binding site. Asparagine 224 contributes to the Mg(2+) binding site. The segment at 227-247 (LQLAALEREFQLQQAKSLMQQ) is linker. The tract at residues 248–454 (GVTLTDPSRF…NYQRPQKLKK (207 aa)) is N-acetyltransferase. Positions 330 and 348 each coordinate UDP-N-acetyl-alpha-D-glucosamine. The active-site Proton acceptor is the histidine 360. UDP-N-acetyl-alpha-D-glucosamine is bound by residues tyrosine 363 and asparagine 374. Acetyl-CoA contacts are provided by residues alanine 377, 383 to 384 (NY), serine 402, alanine 420, and arginine 437.

The protein in the N-terminal section; belongs to the N-acetylglucosamine-1-phosphate uridyltransferase family. In the C-terminal section; belongs to the transferase hexapeptide repeat family. As to quaternary structure, homotrimer. Mg(2+) serves as cofactor.

Its subcellular location is the cytoplasm. The enzyme catalyses alpha-D-glucosamine 1-phosphate + acetyl-CoA = N-acetyl-alpha-D-glucosamine 1-phosphate + CoA + H(+). It catalyses the reaction N-acetyl-alpha-D-glucosamine 1-phosphate + UTP + H(+) = UDP-N-acetyl-alpha-D-glucosamine + diphosphate. It participates in nucleotide-sugar biosynthesis; UDP-N-acetyl-alpha-D-glucosamine biosynthesis; N-acetyl-alpha-D-glucosamine 1-phosphate from alpha-D-glucosamine 6-phosphate (route II): step 2/2. The protein operates within nucleotide-sugar biosynthesis; UDP-N-acetyl-alpha-D-glucosamine biosynthesis; UDP-N-acetyl-alpha-D-glucosamine from N-acetyl-alpha-D-glucosamine 1-phosphate: step 1/1. It functions in the pathway bacterial outer membrane biogenesis; LPS lipid A biosynthesis. Catalyzes the last two sequential reactions in the de novo biosynthetic pathway for UDP-N-acetylglucosamine (UDP-GlcNAc). The C-terminal domain catalyzes the transfer of acetyl group from acetyl coenzyme A to glucosamine-1-phosphate (GlcN-1-P) to produce N-acetylglucosamine-1-phosphate (GlcNAc-1-P), which is converted into UDP-GlcNAc by the transfer of uridine 5-monophosphate (from uridine 5-triphosphate), a reaction catalyzed by the N-terminal domain. The chain is Bifunctional protein GlmU from Acinetobacter baylyi (strain ATCC 33305 / BD413 / ADP1).